Consider the following 343-residue polypeptide: D-alanine--D-alanine ligase (343 aa).

The ATP-grasp domain occupies Lys-129 to Glu-335. Position 162 to 217 (Glu-162 to Glu-217) interacts with ATP. Residues Asp-288, Glu-302, and Asn-304 each contribute to the Mg(2+) site.

Belongs to the D-alanine--D-alanine ligase family. Mg(2+) serves as cofactor. Mn(2+) is required as a cofactor.

The protein resides in the cytoplasm. The enzyme catalyses 2 D-alanine + ATP = D-alanyl-D-alanine + ADP + phosphate + H(+). It participates in cell wall biogenesis; peptidoglycan biosynthesis. In terms of biological role, cell wall formation. This chain is D-alanine--D-alanine ligase, found in Clostridium acetobutylicum (strain ATCC 824 / DSM 792 / JCM 1419 / IAM 19013 / LMG 5710 / NBRC 13948 / NRRL B-527 / VKM B-1787 / 2291 / W).